The chain runs to 340 residues: Large ribosomal subunit protein uL10 (340 aa).

Positions 305-340 are disordered; that stretch reads APQPAEEKVEEAEEEEEEEEEASEEEALAGLGALFG. The span at 312 to 331 shows a compositional bias: acidic residues; that stretch reads KVEEAEEEEEEEEEASEEEA.

It belongs to the universal ribosomal protein uL10 family. As to quaternary structure, part of the 50S ribosomal subunit. Forms part of the ribosomal stalk which helps the ribosome interact with GTP-bound translation factors. Forms a heptameric L10(L12)2(L12)2(L12)2 complex, where L10 forms an elongated spine to which the L12 dimers bind in a sequential fashion.

In terms of biological role, forms part of the ribosomal stalk, playing a central role in the interaction of the ribosome with GTP-bound translation factors. The chain is Large ribosomal subunit protein uL10 from Thermococcus gammatolerans (strain DSM 15229 / JCM 11827 / EJ3).